The sequence spans 312 residues: Elongation factor Ts (312 aa).

Positions 84–87 (TDFL) are involved in Mg(2+) ion dislocation from EF-Tu.

It belongs to the EF-Ts family.

The protein resides in the cytoplasm. Functionally, associates with the EF-Tu.GDP complex and induces the exchange of GDP to GTP. It remains bound to the aminoacyl-tRNA.EF-Tu.GTP complex up to the GTP hydrolysis stage on the ribosome. This chain is Elongation factor Ts, found in Caulobacter sp. (strain K31).